Here is a 259-residue protein sequence, read N- to C-terminus: Ubiquitin-conjugating enzyme E2 J2 (259 aa).

Residues 1-226 (MSNNSNKRAP…AGLPQANRHH (226 aa)) lie on the Cytoplasmic side of the membrane. The region spanning 12-162 (TATQRLKQDY…DKVFCELFPE (151 aa)) is the UBC core domain. C94 (glycyl thioester intermediate) is an active-site residue. The helical; Anchor for type IV membrane protein transmembrane segment at 227–247 (GLLGGALANLFVIVGFAAFAY) threads the bilayer. The Lumenal portion of the chain corresponds to 248 to 259 (TVKYVLRSIAQE).

Belongs to the ubiquitin-conjugating enzyme family. As to quaternary structure, interacts with murid herpesvirus 4 protein K3 (mK3).

The protein localises to the endoplasmic reticulum membrane. The catalysed reaction is S-ubiquitinyl-[E1 ubiquitin-activating enzyme]-L-cysteine + [E2 ubiquitin-conjugating enzyme]-L-cysteine = [E1 ubiquitin-activating enzyme]-L-cysteine + S-ubiquitinyl-[E2 ubiquitin-conjugating enzyme]-L-cysteine.. The protein operates within protein modification; protein ubiquitination. Catalyzes the covalent attachment of ubiquitin to other proteins. Seems to function in the selective degradation of misfolded membrane proteins from the endoplasmic reticulum (ERAD). In cooperation with the GATOR2 complex, catalyzes 'Lys-6'-linked ubiquitination of NPRL2. Functionally, in case of infection by the murid herpesvirus 4, its association with the viral E3 ligase K3 mediates ubiquitination of host surface class I (MHC-I) H-2D(b)/H2-D1 and H-2K(b)/H2-K1 molecules before they exit the endoplasmic reticulum, leading to their degradation by the ERAD system, thus blocking the immune detection of virus-infected cells. The complex formed with the murid herpesvirus 4 protein K3 mediates ubiquitination of lysine, as well as serine and threonine residues present in the cytoplasmic tail of surface class I molecules and promotes ubiquitination of hydroxylated serine or threonine residues via ester bonds instead of the classical isopeptide linkage. The protein is Ubiquitin-conjugating enzyme E2 J2 (Ube2j2) of Mus musculus (Mouse).